The primary structure comprises 257 residues: Global transcriptional regulator CodY (257 aa).

The segment at 1-155 (MSLLSKTREL…AATVIGMEIL (155 aa)) is GAF domain. Residues 203–222 (ASKVADRVGITRSVIVNALR) constitute a DNA-binding region (H-T-H motif).

Belongs to the CodY family.

It localises to the cytoplasm. In terms of biological role, DNA-binding global transcriptional regulator which is involved in the adaptive response to starvation and acts by directly or indirectly controlling the expression of numerous genes in response to nutrient availability. During rapid exponential growth, CodY is highly active and represses genes whose products allow adaptation to nutrient depletion. The sequence is that of Global transcriptional regulator CodY from Staphylococcus saprophyticus subsp. saprophyticus (strain ATCC 15305 / DSM 20229 / NCIMB 8711 / NCTC 7292 / S-41).